A 312-amino-acid polypeptide reads, in one-letter code: Protoheme IX farnesyltransferase (312 aa).

The next 8 helical transmembrane spans lie at 33–53, 54–74, 105–125, 126–146, 154–174, 181–201, 243–263, and 291–311; these read VMLLVVFTALVGLIVSPVSIN, PLYGFLAILCIAVGGGGAGAL, FIFGMVLSILSVLIMGSFVNW, FAALFLAFTIFFYIVVYTIWL, IVIGGAAGAFPPMIGWAAATG, FLLFLIIFMWTPPHFWSLSLF, IIGFAGVFYGIFSTVLSIIFI, and FYLAAIFGILLIEFFVWCFII.

This sequence belongs to the UbiA prenyltransferase family. Protoheme IX farnesyltransferase subfamily.

It is found in the cell inner membrane. The catalysed reaction is heme b + (2E,6E)-farnesyl diphosphate + H2O = Fe(II)-heme o + diphosphate. It participates in porphyrin-containing compound metabolism; heme O biosynthesis; heme O from protoheme: step 1/1. Its function is as follows. Converts heme B (protoheme IX) to heme O by substitution of the vinyl group on carbon 2 of heme B porphyrin ring with a hydroxyethyl farnesyl side group. This chain is Protoheme IX farnesyltransferase, found in Bartonella henselae (strain ATCC 49882 / DSM 28221 / CCUG 30454 / Houston 1) (Rochalimaea henselae).